A 282-amino-acid chain; its full sequence is Pantothenate synthetase (282 aa).

An ATP-binding site is contributed by 33–40 (MGALHAGH). His-40 functions as the Proton donor in the catalytic mechanism. Residue Gln-64 coordinates (R)-pantoate. Gln-64 contacts beta-alanine. 150-153 (GEKD) contributes to the ATP binding site. Position 156 (Gln-156) interacts with (R)-pantoate. ATP-binding positions include Val-179 and 187–190 (LSSR).

This sequence belongs to the pantothenate synthetase family. As to quaternary structure, homodimer.

Its subcellular location is the cytoplasm. The catalysed reaction is (R)-pantoate + beta-alanine + ATP = (R)-pantothenate + AMP + diphosphate + H(+). The protein operates within cofactor biosynthesis; (R)-pantothenate biosynthesis; (R)-pantothenate from (R)-pantoate and beta-alanine: step 1/1. Functionally, catalyzes the condensation of pantoate with beta-alanine in an ATP-dependent reaction via a pantoyl-adenylate intermediate. The polypeptide is Pantothenate synthetase (Rhodospirillum rubrum (strain ATCC 11170 / ATH 1.1.1 / DSM 467 / LMG 4362 / NCIMB 8255 / S1)).